Here is a 475-residue protein sequence, read N- to C-terminus: Ribulose bisphosphate carboxylase large chain (475 aa).

Residues 1–2 (MS) constitute a propeptide that is removed on maturation. Pro-3 is modified (N-acetylproline). Lys-14 carries the post-translational modification N6,N6,N6-trimethyllysine. Substrate contacts are provided by Asn-123 and Thr-173. Catalysis depends on Lys-175, which acts as the Proton acceptor. Residue Lys-177 coordinates substrate. Lys-201, Asp-203, and Glu-204 together coordinate Mg(2+). Lys-201 is subject to N6-carboxylysine. His-294 serves as the catalytic Proton acceptor. Substrate-binding residues include Arg-295, His-327, and Ser-379.

It belongs to the RuBisCO large chain family. Type I subfamily. As to quaternary structure, heterohexadecamer of 8 large chains and 8 small chains; disulfide-linked. The disulfide link is formed within the large subunit homodimers. Mg(2+) serves as cofactor. The disulfide bond which can form in the large chain dimeric partners within the hexadecamer appears to be associated with oxidative stress and protein turnover.

It localises to the plastid. It is found in the chloroplast. It catalyses the reaction 2 (2R)-3-phosphoglycerate + 2 H(+) = D-ribulose 1,5-bisphosphate + CO2 + H2O. The catalysed reaction is D-ribulose 1,5-bisphosphate + O2 = 2-phosphoglycolate + (2R)-3-phosphoglycerate + 2 H(+). Its function is as follows. RuBisCO catalyzes two reactions: the carboxylation of D-ribulose 1,5-bisphosphate, the primary event in carbon dioxide fixation, as well as the oxidative fragmentation of the pentose substrate in the photorespiration process. Both reactions occur simultaneously and in competition at the same active site. This chain is Ribulose bisphosphate carboxylase large chain, found in Pinus edulis (Pinyon pine).